Here is a 383-residue protein sequence, read N- to C-terminus: MRLLSFKKSKIVSIGTELEFQIIDCSSLSLVSRSKELMRALKDMRYRDQIKPEITQSMIEINSSIHQSAKEMYDELLELQKILVETAASIDIAFCGGGTHPFQQWTMQKIFPSKRFKKKFNQYRYLSKRATVFGQHIHIGCPTGDDAIYLTHALARYVPHFIAISASSPFYLGINTNYCSSRSTIFNAFPLSGVIPYLRNWQEFSDYYRKMYRWKIIENMKDFYWDIRPKPELGTIEIRVCDTPLTLRKSILITAYIQALALYLLEEKPVELSHDLYYVYNYNRFQASRHGLEGELTVTDKDRPIPIMDDILETIKKIEQYINELGNNEYIEELYSDVINKQNDSVLINKMYKQDGSFSKLVAAQCELWLSDSKDRKWMTQPS.

This sequence belongs to the glutamate--cysteine ligase type 2 family. YbdK subfamily.

It catalyses the reaction L-cysteine + L-glutamate + ATP = gamma-L-glutamyl-L-cysteine + ADP + phosphate + H(+). Functionally, ATP-dependent carboxylate-amine ligase which exhibits weak glutamate--cysteine ligase activity. The chain is Putative glutamate--cysteine ligase 2-2 from Legionella pneumophila (strain Lens).